The primary structure comprises 312 residues: tRNA dimethylallyltransferase (312 aa).

ATP is bound at residue 14-21; sequence GPTASGKS. Residue 16–21 coordinates substrate; it reads TASGKS. Interaction with substrate tRNA stretches follow at residues 39-42 and 163-167; these read DSSL and QRLQR.

It belongs to the IPP transferase family. Monomer. It depends on Mg(2+) as a cofactor.

It carries out the reaction adenosine(37) in tRNA + dimethylallyl diphosphate = N(6)-dimethylallyladenosine(37) in tRNA + diphosphate. Functionally, catalyzes the transfer of a dimethylallyl group onto the adenine at position 37 in tRNAs that read codons beginning with uridine, leading to the formation of N6-(dimethylallyl)adenosine (i(6)A). The protein is tRNA dimethylallyltransferase of Methylococcus capsulatus (strain ATCC 33009 / NCIMB 11132 / Bath).